We begin with the raw amino-acid sequence, 137 residues long: Large ribosomal subunit protein uL16c (137 aa).

The protein belongs to the universal ribosomal protein uL16 family. As to quaternary structure, part of the 50S ribosomal subunit.

The protein localises to the plastid. This Cuscuta exaltata (Tall dodder) protein is Large ribosomal subunit protein uL16c.